A 183-amino-acid polypeptide reads, in one-letter code: Transposon gamma-delta resolvase (183 aa).

Residues 2–137 (RLFGYARVST…EGRQEAMAKG (136 aa)) enclose the Resolvase/invertase-type recombinase catalytic domain. Ser10 serves as the catalytic O-(5'-phospho-DNA)-serine intermediate. The H-T-H motif DNA-binding region spans 161–180 (ASHISKTMNIARSTVYKVIN).

This sequence belongs to the site-specific recombinase resolvase family.

In terms of biological role, this protein catalyzes the site-specific recombination of the transposon and also regulates its frequency of transposition. This Escherichia coli (strain K12) protein is Transposon gamma-delta resolvase (tnpR).